Reading from the N-terminus, the 222-residue chain is Charged multivesicular body protein 2a (222 aa).

N-acetylmethionine is present on Met-1. A coiled-coil region spans residues 12 to 53 (EELLRQNQRALNRAMRELDRERQKLETQEKKIIADIKKMAKQ). Positions 56–222 (MDAVRIMAKD…EERLKNLRRD (167 aa)) are interaction with VPS4B. Ser-184 carries the post-translational modification Phosphoserine. Position 185 is a phosphothreonine (Thr-185). Phosphoserine is present on residues Ser-188, Ser-190, and Ser-203. The stretch at 195–222 (GKKAEAAASALADADADLEERLKNLRRD) forms a coiled coil. The short motif at 210–220 (ADLEERLKNLR) is the MIT-interacting motif element. The segment at 217–222 (KNLRRD) is interaction with VTA1.

This sequence belongs to the SNF7 family. Probable core component of the endosomal sorting required for transport complex III (ESCRT-III). ESCRT-III components are thought to multimerize to form a flat lattice on the perimeter membrane of the endosome. Several assembly forms of ESCRT-III may exist that interact and act sequentially. In vitro, heteromerizes with CHMP3 (but not CHMP4) to form helical tubular structures that expose membrane-interacting sites on the outside whereas VPS4B can associate on the inside of the tubule. Interacts with CHMP1B, CHMP2B, CHMP3, CHMP4A, CHMP4B, CHMP4C and CHMP5. Interacts with VPS4A; the interaction is direct. Interacts with VPS4B; the interaction is direct. Interacts with MITD1. Interacts with VTA1; the interaction probably involves the open conformation of CHMP2A. Post-translationally, ISGylated in a CHMP5-dependent manner. Isgylation weakens and inhibits its interactions with VPS4A and VTA1 respectively.

The protein resides in the late endosome membrane. It is found in the nucleus envelope. Probable core component of the endosomal sorting required for transport complex III (ESCRT-III) which is involved in multivesicular bodies (MVBs) formation and sorting of endosomal cargo proteins into MVBs. MVBs contain intraluminal vesicles (ILVs) that are generated by invagination and scission from the limiting membrane of the endosome and mostly are delivered to lysosomes enabling degradation of membrane proteins, such as stimulated growth factor receptors, lysosomal enzymes and lipids. The MVB pathway appears to require the sequential function of ESCRT-O, -I,-II and -III complexes. ESCRT-III proteins mostly dissociate from the invaginating membrane before the ILV is released. The ESCRT machinery also functions in topologically equivalent membrane fission events, such as the terminal stages of cytokinesis. Together with SPAST, the ESCRT-III complex promotes nuclear envelope sealing and mitotic spindle disassembly during late anaphase. Recruited to the reforming nuclear envelope (NE) during anaphase by LEMD2. ESCRT-III proteins are believed to mediate the necessary vesicle extrusion and/or membrane fission activities, possibly in conjunction with the AAA ATPase VPS4. In terms of biological role, (Microbial infection) The ESCRT machinery functions in topologically equivalent membrane fission events, such as the budding of enveloped viruses (HIV-1 and other lentiviruses). Involved in HIV-1 p6- and p9-dependent virus release. The polypeptide is Charged multivesicular body protein 2a (CHMP2A) (Homo sapiens (Human)).